A 505-amino-acid polypeptide reads, in one-letter code: ATP nucleosidase Cap17 (505 aa).

Residues 1 to 229 (MTNTNNEYVL…RLSEIAVELL (229 aa)) form a cyclic oligonucleotide sensing-domain region. The tract at residues 239 to 505 (LHTPSVLILT…DYLQHGWIRA (267 aa)) is purine nucleoside phosphorylase domain.

It belongs to the Cap17 family.

The enzyme catalyses ATP + H2O = D-ribose 5-triphosphate + adenine. It catalyses the reaction dATP + H2O = 2-deoxyribose 5-triphosphate + adenine. Its function is as follows. Effector protein with (d)ATP degrading activity of a CBASS antivirus system. CBASS (cyclic oligonucleotide-based antiphage signaling system) provides immunity against bacteriophage. A CD-NTase protein synthesizes cyclic nucleotides in response to infection; these serve as specific second messenger signals. The signals activate a diverse range of effectors, leading to bacterial cell death and thus abortive phage infection. A type III CBASS system. Expression of this CBASS system (Cap18-Cap6-Cap7-CdnC-CapW-Cap17) in a susceptible E.coli (strain MG1655) confers resistance to bacteriophage P1, leading to cell lysis. By 50 minutes post-infection, ATP levels are markedly reduced while dATP has been eliminated. The C-terminal purine nucleoside phosphorylase (PNP) domain cleaves the N-glycosidic bond of (d)ATP to release adenine and a sugar triphosphate; has no activity on other (d)NTPs, nor on DNA or RNA. In vivo during phage infection has pleoitropic effects on nucleotide accumulation. This protein may be activated by the cognate CD-NTase (CdnC). This is ATP nucleosidase Cap17 from Escherichia coli (strain KTE188).